The sequence spans 163 residues: GTP-dependent dephospho-CoA kinase (163 aa).

GTP-binding residues include aspartate 38, valine 39, aspartate 57, glutamate 115, and aspartate 138.

It belongs to the GTP-dependent DPCK family.

The catalysed reaction is 3'-dephospho-CoA + GTP = GDP + CoA + H(+). The protein operates within cofactor biosynthesis; coenzyme A biosynthesis. Its function is as follows. Catalyzes the GTP-dependent phosphorylation of the 3'-hydroxyl group of dephosphocoenzyme A to form coenzyme A (CoA). In Methanothermobacter thermautotrophicus (strain ATCC 29096 / DSM 1053 / JCM 10044 / NBRC 100330 / Delta H) (Methanobacterium thermoautotrophicum), this protein is GTP-dependent dephospho-CoA kinase.